Here is a 37-residue protein sequence, read N- to C-terminus: Large ribosomal subunit protein bL36 (37 aa).

The protein belongs to the bacterial ribosomal protein bL36 family.

The chain is Large ribosomal subunit protein bL36 from Brevibacillus brevis (strain 47 / JCM 6285 / NBRC 100599).